Reading from the N-terminus, the 99-residue chain is MSDSPVKKGRGRPAKAKPEETASPKAAKKEEKKVEEVPKKIEESTKPENGAAPKKGRGRPSKGDKAAPKRPASGKGRGRPAKNAKKVDDADTEEVNSSD.

The tract at residues 1 to 99 is disordered; the sequence is MSDSPVKKGR…ADTEEVNSSD (99 aa). Ser4 is subject to Phosphoserine; by CDC2 and MAPK. Positions 7–19 form a DNA-binding region, a.T hook 1; that stretch reads KKGRGRPAKAKPE. Over residues 16–46 the composition is skewed to basic and acidic residues; sequence AKPEETASPKAAKKEEKKVEEVPKKIEESTK. Ser23 bears the Phosphoserine; by MAPK mark. A DNA-binding region (a.T hook 2) is located at residues 54–66; sequence KKGRGRPSKGDKA. Ser73 carries the post-translational modification Phosphoserine; by PKC. Residues 74 to 86 constitute a DNA-binding region (a.T hook 3); sequence GKGRGRPAKNAKK. Over residues 90 to 99 the composition is skewed to acidic residues; it reads ADTEEVNSSD.

Belongs to the HMGA family. Post-translationally, phosphorylated in a cell-cycle dependent manner; substantially reduced in cells that have finished proliferating and are differentiated. Phosphorylation at Ser-4 and Ser-23 results in a 10-fold weakening of DNA-binding activity and altered the mode of protein-DNA interaction.

It localises to the nucleus. The protein resides in the nucleolus. Its subcellular location is the chromosome. Functionally, binds preferentially to the minor groove of A+T rich regions in double-stranded DNA via the second and third DBA-binding domains. It is suggested that these proteins could function in nucleosome phasing and in the 3'-end processing of mRNA transcripts. They are also involved in the transcription regulation of genes containing, or in close proximity to A+T-rich regions. The sequence is that of High mobility group protein I from Chironomus tentans (Midge).